The primary structure comprises 125 residues: Small ribosomal subunit protein uS12m (125 aa).

Belongs to the universal ribosomal protein uS12 family.

It localises to the mitochondrion. Protein S12 is involved in the translation initiation step. This chain is Small ribosomal subunit protein uS12m (RPS12), found in Allium cepa (Onion).